A 655-amino-acid chain; its full sequence is Tumor necrosis factor receptor superfamily member 21 (655 aa).

Positions 1 to 41 are cleaved as a signal peptide; the sequence is MGTRASSITALASCSRTAGQVGATMVAGSLLLLGFLSTITA. The Extracellular segment spans residues 42–349; sequence QPEQKTLSLP…AHKHFDINEH (308 aa). TNFR-Cys repeat units lie at residues 50–88, 90–131, 133–167, and 170–211; these read LPGTYRHVDRTTGQVLTCDKCPAGTYVSEHCTNMSLRVC, SCPA…DREC, CPPGMYQSNGTCAPHTVCPVGWGVRKKGTENEDVR, and QCAR…DNVC. Disulfide bonds link cysteine 67/cysteine 80, cysteine 70/cysteine 88, cysteine 91/cysteine 106, cysteine 109/cysteine 123, cysteine 113/cysteine 131, cysteine 133/cysteine 144, cysteine 150/cysteine 168, cysteine 171/cysteine 186, and cysteine 192/cysteine 211. The N-linked (GlcNAc...) asparagine glycan is linked to asparagine 82. The N-linked (GlcNAc...) asparagine glycan is linked to asparagine 141. Disordered regions lie at residues 222–305 and 318–339; these read PPSS…QAPH and EATGEKSSTAIKAPKRGHPRQN. Polar residues-rich tracts occupy residues 241-262 and 276-302; these read VPSSTYEPQGMNSTDSNSTASV and PDNTSSTSGKEGTNRTLPNPPQVTHQQ. Asparagine 252, asparagine 257, asparagine 278, and asparagine 289 each carry an N-linked (GlcNAc...) asparagine glycan. Residues 330 to 339 are compositionally biased toward basic residues; sequence APKRGHPRQN. A helical transmembrane segment spans residues 350–370; sequence LPWMIVLFLLLVLVLIVVCSI. Cysteine 368 is lipidated: S-palmitoyl cysteine. Topologically, residues 371-655 are cytoplasmic; the sequence is RKSSRTLKKG…SVYSHLPDLL (285 aa). Residues 415–498 form the Death domain; it reads GIDILKLVAA…DVVEKIRGLM (84 aa).

Associates with TRADD. Interacts with NGFR. Interacts with CASP8. Post-translationally, oxidized in response to reactive oxygen species (ROS), leading to endocytosis. As to expression, detected in spleen B-cells (at protein level). Ubiquitous. Highly expressed in adult spleen, thymus, testis, prostate, ovary, small intestine, colon, brain, lung and kidney, and in fetal brain, liver and lung. Detected at lower levels in adult peripheral blood leukocytes, lung, and in fetal muscle, heart, kidney, small intestine and skin. Detected in T-cells, B-cells and monocytes. In T-cells expression is highest in Th0 cells, intermediate in Th2 cells and lower in Th1 cells. Expressed at low levels in proliferating progenitors in the spinal cord, but is highly expressed by differentiating neurons within the spinal cord and adjacent dorsal root ganglia.

The protein localises to the cell membrane. Promotes apoptosis, possibly via a pathway that involves the activation of NF-kappa-B. Can also promote apoptosis mediated by BAX and by the release of cytochrome c from the mitochondria into the cytoplasm. Trophic-factor deprivation triggers the cleavage of surface APP by beta-secretase to release sAPP-beta which is further cleaved to release an N-terminal fragment of APP (N-APP). Negatively regulates oligodendrocyte survival, maturation and myelination. Plays a role in signaling cascades triggered by stimulation of T-cell receptors, in the adaptive immune response and in the regulation of T-cell differentiation and proliferation. Negatively regulates T-cell responses and the release of cytokines such as IL4, IL5, IL10, IL13 and IFNG by Th2 cells. Negatively regulates the production of IgG, IgM and IgM in response to antigens. May inhibit the activation of JNK in response to T-cell stimulation. Also acts as a regulator of pyroptosis: recruits CASP8 in response to reactive oxygen species (ROS) and subsequent oxidation, leading to activation of GSDMC. The sequence is that of Tumor necrosis factor receptor superfamily member 21 (Tnfrsf21) from Mus musculus (Mouse).